A 69-amino-acid chain; its full sequence is Cold shock-like protein CspC (69 aa).

Positions 6–66 constitute a CSD domain; sequence GQVKWFNESK…GQKGPAAVNV (61 aa).

It is found in the cytoplasm. The protein is Cold shock-like protein CspC (cspC) of Escherichia coli O157:H7.